Here is a 251-residue protein sequence, read N- to C-terminus: 5'-nucleotidase SurE (251 aa).

A divalent metal cation-binding residues include Asp8, Asp9, Ser39, and Asn90.

This sequence belongs to the SurE nucleotidase family. The cofactor is a divalent metal cation.

The protein localises to the cytoplasm. It carries out the reaction a ribonucleoside 5'-phosphate + H2O = a ribonucleoside + phosphate. Nucleotidase that shows phosphatase activity on nucleoside 5'-monophosphates. The chain is 5'-nucleotidase SurE from Legionella pneumophila subsp. pneumophila (strain Philadelphia 1 / ATCC 33152 / DSM 7513).